The chain runs to 540 residues: L-aspartate oxidase (540 aa).

Residues 16 to 19 (SGAA), Lys-38, 45 to 52 (STFYAQGG), 161 to 162 (NA), and Asp-223 contribute to the FAD site. Succinate-binding positions include His-244 and 259 to 260 (TE). The active-site Proton donor/acceptor is the Arg-290. Position 375 (Glu-375) interacts with FAD. Ser-389 serves as a coordination point for succinate. Residue 391 to 392 (SL) coordinates FAD.

This sequence belongs to the FAD-dependent oxidoreductase 2 family. NadB subfamily. Monomer. Homodimer. Both the monomeric and dimeric forms of the enzyme are catalytically active. FAD is required as a cofactor.

It is found in the cytoplasm. It carries out the reaction L-aspartate + O2 = iminosuccinate + H2O2. It catalyses the reaction fumarate + L-aspartate = iminosuccinate + succinate. It participates in cofactor biosynthesis; NAD(+) biosynthesis; iminoaspartate from L-aspartate (oxidase route): step 1/1. Its activity is regulated as follows. Inhibited by the product iminoaspartate. Competitively inhibited by mesotartrate. NAD acts as a competitive inhibitor to FAD. Inhibited by iodoacetic acid, diethylpyrocarbonate and tetranitromethane. In terms of biological role, catalyzes the oxidation of L-aspartate to iminoaspartate, the first step in the de novo biosynthesis of NAD(+). Can use either oxygen or fumarate as electron acceptors, which allows the enzyme to be functional under aerobic and anaerobic conditions. In vivo, fumarate is used under anaerobic conditions, and oxygen is the predominant electron acceptor under aerobic conditions due to the lower fumarate levels. In vitro, fumarate is a more efficient electron acceptor and is kinetically superior to oxygen. This chain is L-aspartate oxidase, found in Escherichia coli (strain K12).